Reading from the N-terminus, the 105-residue chain is Heat shock protein HspQ (105 aa).

The protein belongs to the HspQ family.

It is found in the cytoplasm. Functionally, involved in the degradation of certain denaturated proteins, including DnaA, during heat shock stress. The chain is Heat shock protein HspQ from Baumannia cicadellinicola subsp. Homalodisca coagulata.